Consider the following 165-residue polypeptide: Adenine phosphoribosyltransferase (165 aa).

Belongs to the purine/pyrimidine phosphoribosyltransferase family. In terms of assembly, homodimer.

Its subcellular location is the cytoplasm. The enzyme catalyses AMP + diphosphate = 5-phospho-alpha-D-ribose 1-diphosphate + adenine. It functions in the pathway purine metabolism; AMP biosynthesis via salvage pathway; AMP from adenine: step 1/1. Catalyzes a salvage reaction resulting in the formation of AMP, that is energically less costly than de novo synthesis. The chain is Adenine phosphoribosyltransferase from Bdellovibrio bacteriovorus (strain ATCC 15356 / DSM 50701 / NCIMB 9529 / HD100).